An 870-amino-acid chain; its full sequence is DNA polymerase kappa (870 aa).

The 256-residue stretch at 103-358 (IVHIDMDAFY…LPIRKVSGIG (256 aa)) folds into the UmuC domain. Residues D107, D198, and E199 each contribute to the Mg(2+) site. 2 consecutive UBZ4-type zinc fingers follow at residues 621–651 (ILTC…DGPS) and 776–806 (ALVC…NKSF). Residues C624, C627, H642, C646, C779, C782, H797, and C801 each coordinate Zn(2+). Residues 816–858 (NPVNQPKESSRSTGSSSGVQKAVTRTKRPGLMTKYSTSKKIKP) are disordered.

The protein belongs to the DNA polymerase type-Y family. As to quaternary structure, interacts with REV1. Interacts with PCNA. The cofactor is Mg(2+). Mn(2+) is required as a cofactor. Detected at low levels in testis, spleen, prostate and ovary. Detected at very low levels in kidney, colon, brain, heart, liver, lung, placenta, pancreas and peripheral blood leukocytes.

It localises to the nucleus. It carries out the reaction DNA(n) + a 2'-deoxyribonucleoside 5'-triphosphate = DNA(n+1) + diphosphate. Functionally, DNA polymerase specifically involved in DNA repair. Plays an important role in translesion synthesis, where the normal high-fidelity DNA polymerases cannot proceed and DNA synthesis stalls. Depending on the context, it inserts the correct base, but causes frequent base transitions, transversions and frameshifts. Lacks 3'-5' proofreading exonuclease activity. Forms a Schiff base with 5'-deoxyribose phosphate at abasic sites, but does not have lyase activity. The chain is DNA polymerase kappa (POLK) from Homo sapiens (Human).